A 528-amino-acid chain; its full sequence is OLD nuclease (528 aa).

Residues 1–153 (MLKRLQVKNF…LAQHLPSIRG (153 aa)) form an ATPase domain N-terminus region. 31–35 (GAGKT) is an ATP binding site. The dimerization domain stretch occupies residues 154 to 245 (SILGRLLQPV…RESDLTLPGD (92 aa)). The interval 246–369 (ELGLGIQSAI…FDTARNEVLF (124 aa)) is ATPase domain C-terminus. The interval 370-528 (AKRALLVEGY…IRQVTRPMEE (159 aa)) is toprim domain. A divalent metal cation is bound by residues Glu377, Asp381, Asp431, and Asp433. The segment at 440–461 (RADEETRRKQEQENKAEQEKNQ) is disordered. Positions 478 and 480 each coordinate a divalent metal cation. The active-site Stabilizes transition state or protonates leaving group is Arg487.

The protein belongs to the class 1 OLD nuclease family. Homodimer. The cofactor is Mg(2+). Mn(2+) serves as cofactor. Requires Ca(2+) as cofactor.

It carries out the reaction Exonucleolytic cleavage in the 5'- to 3'-direction to yield nucleoside 5'-phosphates.. An exodeoxyribonuclease that degrades linear or supercoiled dsDNA from 5'-3'. Nicks and linearizes circular DNA. Activity is not stimulated by ATP or AMP-PNP, although it has DNA-stimulated ATPase activity. This Thermus scotoductus (strain ATCC 700910 / SA-01) protein is OLD nuclease.